Reading from the N-terminus, the 834-residue chain is Pentatricopeptide repeat-containing protein At4g39530 (834 aa).

PPR repeat units lie at residues 78–112, 113–144, 145–181, 182–212, 213–247, 248–282, 283–313, 314–348, 349–383, 384–414, 415–452, 453–487, 488–518, 519–553, 554–588, 589–619, 620–654, 655–689, and 690–720; these read DTYL…NLVS, WSTM…KDSP, NEYI…GFDR, DVYV…LPEK, STVT…NVVP, DGYI…GLEM, DASL…MPNK, NIIS…GLKP, DMYA…NLGN, DSYV…FAAA, DVVL…LIRP, SLLT…GLNL, DIFA…MKVK, DLVI…RERP, DEFT…GLEC, NPYI…AASR, DVVC…GIEP, NYIT…GIEP, and ETEH…MPTK. A type E motif region spans residues 725 to 800; it reads VWRSLLSGCA…EPGRSWIGIN (76 aa). The tract at residues 801–831 is type E(+) motif; it reads KEVHIFLSKDKSHCKANQIYEVLDDLLVQIR.

The protein belongs to the PPR family. PCMP-E subfamily.

In Arabidopsis thaliana (Mouse-ear cress), this protein is Pentatricopeptide repeat-containing protein At4g39530 (PCMP-E52).